The sequence spans 674 residues: Probable copper-transporting P-type ATPase B (674 aa).

Residues 1–22 (MNHSNQMHHDNHASHDHHSGHA) are disordered. A compositionally biased stretch (basic and acidic residues) spans 7-19 (MHHDNHASHDHHS). 6 consecutive transmembrane segments (helical) span residues 32–52 (FFVS…MGVN), 57–77 (FTFP…FFYG), 95–115 (GMMT…LYAF), 127–147 (TMDF…GHWI), 284–304 (GYLF…WMLI), and 315–335 (LVTV…PLVT). The active-site 4-aspartylphosphate intermediate is the Asp367. 2 residues coordinate Mg(2+): Asp565 and Asp569. Transmembrane regions (helical) follow at residues 623-645 (LWWG…AFIG) and 649-671 (SPAI…AFTL).

It belongs to the cation transport ATPase (P-type) (TC 3.A.3) family. Type IB subfamily.

It localises to the cell membrane. The enzyme catalyses Cu(+)(in) + ATP + H2O = Cu(+)(out) + ADP + phosphate + H(+). Its function is as follows. Involved in copper transport. This chain is Probable copper-transporting P-type ATPase B (copB), found in Staphylococcus aureus (strain USA300 / TCH1516).